The primary structure comprises 148 residues: Small ribosomal subunit protein bS16 (148 aa).

The tract at residues 107–148 (AAARAAAGAEDRPATTPKKAKKAASADGADAPAADAPTAAGQ) is disordered. Residues 129–148 (AASADGADAPAADAPTAAGQ) show a composition bias toward low complexity.

The protein belongs to the bacterial ribosomal protein bS16 family.

The sequence is that of Small ribosomal subunit protein bS16 from Frankia alni (strain DSM 45986 / CECT 9034 / ACN14a).